The chain runs to 873 residues: Protein translocase subunit SecA (873 aa).

Residues Gln88, 106-110 (GEGKT), and Asp501 each bind ATP. Zn(2+) is bound by residues Cys856, Cys858, Cys867, and His868.

Belongs to the SecA family. As to quaternary structure, monomer and homodimer. Part of the essential Sec protein translocation apparatus which comprises SecA, SecYEG and auxiliary proteins SecDF-YajC and YidC. Requires Zn(2+) as cofactor.

The protein localises to the cell inner membrane. Its subcellular location is the cytoplasm. The enzyme catalyses ATP + H2O + cellular proteinSide 1 = ADP + phosphate + cellular proteinSide 2.. Part of the Sec protein translocase complex. Interacts with the SecYEG preprotein conducting channel. Has a central role in coupling the hydrolysis of ATP to the transfer of proteins into and across the cell membrane, serving both as a receptor for the preprotein-SecB complex and as an ATP-driven molecular motor driving the stepwise translocation of polypeptide chains across the membrane. This Anaplasma phagocytophilum (strain HZ) protein is Protein translocase subunit SecA.